The primary structure comprises 325 residues: Aldo-keto reductase family 1 member A1 (325 aa).

Ala-2 is subject to N-acetylalanine. At Ser-4 the chain carries Phosphoserine. Residues 11–20 (GQKMPLIGLG), Thr-21, and Trp-22 each bind NADP(+). Phosphoserine is present on Ser-38. Asp-45 is a binding site for NADP(+). Tyr-50 acts as the Proton donor in catalysis. N6-acetyllysine; alternate is present on Lys-127. Lys-127 is modified (N6-succinyllysine; alternate). N6-succinyllysine is present on Lys-145. NADP(+) contacts are provided by Ser-162, Asn-163, Ser-211, Leu-213, Ser-215, Ser-216, Lys-263, Ser-264, Ile-265, Thr-266, Arg-269, Gln-272, and Asn-273. Position 211 is a phosphoserine (Ser-211).

The protein belongs to the aldo/keto reductase family.

Its subcellular location is the cytoplasm. The protein resides in the cytosol. The protein localises to the apical cell membrane. It catalyses the reaction a primary alcohol + NADP(+) = an aldehyde + NADPH + H(+). The catalysed reaction is L-gulonate + NADP(+) = aldehydo-D-glucuronate + NADPH + H(+). It carries out the reaction L-gulono-1,4-lactone + NADP(+) = D-glucurono-3,6-lactone + NADPH + H(+). The enzyme catalyses allyl alcohol + NADP(+) = acrolein + NADPH + H(+). It catalyses the reaction glycerol + NADP(+) = D-glyceraldehyde + NADPH + H(+). The catalysed reaction is glycerol + NADP(+) = L-glyceraldehyde + NADPH + H(+). It carries out the reaction hydroxyacetone + NADP(+) = methylglyoxal + NADPH + H(+). The enzyme catalyses 3-deoxyfructose + NADP(+) = 3-deoxyglucosone + NADPH + H(+). It catalyses the reaction (R)-mevalonate + NADP(+) = (R)-mevaldate + NADPH + H(+). The catalysed reaction is pyridine 3-methanol + NADP(+) = pyridine-3-carbaldehyde + NADPH + H(+). It carries out the reaction S-nitroso-CoA + NADPH + H(+) = sulfinamide-CoA + NADP(+). The enzyme catalyses S-nitrosoglutathione + NADPH + H(+) = S-(hydroxysulfenamide)glutathione + NADP(+). Catalyzes the NADPH-dependent reduction of a wide variety of carbonyl-containing compounds to their corresponding alcohols. Displays enzymatic activity towards endogenous metabolites such as aromatic and aliphatic aldehydes, ketones, monosaccharides and bile acids, with a preference for negatively charged substrates, such as glucuronate and succinic semialdehyde. Functions as a detoxifiying enzyme by reducing a range of toxic aldehydes. Reduces methylglyoxal and 3-deoxyglucosone, which are present at elevated levels under hyperglycemic conditions and are cytotoxic. Involved also in the detoxification of lipid-derived aldehydes like acrolein. Plays a role in the activation of procarcinogens, such as polycyclic aromatic hydrocarbon trans-dihydrodiols, and in the metabolism of various xenobiotics and drugs. Also acts as an inhibitor of protein S-nitrosylation by mediating degradation of S-nitroso-coenzyme A (S-nitroso-CoA), a cofactor required to S-nitrosylate proteins. S-nitroso-CoA reductase activity is involved in reprogramming intermediary metabolism in renal proximal tubules, notably by inhibiting protein S-nitrosylation of isoform 2 of PKM (PKM2). Also acts as a S-nitroso-glutathione reductase by catalyzing the NADPH-dependent reduction of S-nitrosoglutathione. Displays no reductase activity towards retinoids. In Pongo abelii (Sumatran orangutan), this protein is Aldo-keto reductase family 1 member A1 (AKR1A1).